The primary structure comprises 188 residues: Elongation factor P (188 aa).

Lysine 34 bears the N6-(3,6-diaminohexanoyl)-5-hydroxylysine mark.

It belongs to the elongation factor P family. In terms of processing, may be beta-lysylated on the epsilon-amino group of Lys-34 by the combined action of EpmA and EpmB, and then hydroxylated on the C5 position of the same residue by EpmC (if this protein is present). Lysylation is critical for the stimulatory effect of EF-P on peptide-bond formation. The lysylation moiety may extend toward the peptidyltransferase center and stabilize the terminal 3-CCA end of the tRNA. Hydroxylation of the C5 position on Lys-34 may allow additional potential stabilizing hydrogen-bond interactions with the P-tRNA.

It is found in the cytoplasm. It participates in protein biosynthesis; polypeptide chain elongation. Functionally, involved in peptide bond synthesis. Alleviates ribosome stalling that occurs when 3 or more consecutive Pro residues or the sequence PPG is present in a protein, possibly by augmenting the peptidyl transferase activity of the ribosome. Modification of Lys-34 is required for alleviation. This Vibrio vulnificus (strain CMCP6) protein is Elongation factor P.